We begin with the raw amino-acid sequence, 134 residues long: Large-conductance mechanosensitive channel (134 aa).

2 consecutive transmembrane segments (helical) span residues 16 to 36 (VIDL…VTAL) and 84 to 104 (INTL…IKVI).

This sequence belongs to the MscL family. Homopentamer.

Its subcellular location is the cell inner membrane. Channel that opens in response to stretch forces in the membrane lipid bilayer. May participate in the regulation of osmotic pressure changes within the cell. This Stenotrophomonas maltophilia (strain R551-3) protein is Large-conductance mechanosensitive channel.